Here is a 1825-residue protein sequence, read N- to C-terminus: Serine protease/ABC transporter B family protein tagD (1825 aa).

Positions 1-26 (MKSNTNIRVLLVSGLILIFIFLGIKF) are cleaved as a signal peptide. A Peptidase S8 domain is found at 307 to 727 (PKAIFGTKDT…NAVFDTFAGA (421 aa)). Active-site charge relay system residues include Asp-338 and His-384. The N-linked (GlcNAc...) asparagine glycan is linked to Asn-629. Ser-652 serves as the catalytic Charge relay system. N-linked (GlcNAc...) asparagine glycans are attached at residues Asn-704, Asn-781, Asn-849, and Asn-896. Residues 971–991 (YIVIIVAGGTMSLIITVLILI) traverse the membrane as a helical segment. A glycan (N-linked (GlcNAc...) asparagine) is linked at Asn-1018. A run of 4 helical transmembrane segments spans residues 1071-1091 (FIIEITISTACSLVATAASIL), 1116-1136 (FIIIFLLALLEFVFSTISSWI), 1189-1209 (GILLSVSVGICKFVGSLVFIF), and 1210-1230 (TISWKLSLAFFATVPVLAIVT). Positions 1075 to 1358 (ITISTACSLV…LFGVYSSYVQ (284 aa)) constitute an ABC transmembrane type-1 domain. Residue Asn-1295 is glycosylated (N-linked (GlcNAc...) asparagine). Transmembrane regions (helical) follow at residues 1304–1324 (WLMVESLAFIILYFGAYLAIQ) and 1327–1347 (FTVGLLVSFSLYIGYVIDSST). The segment at 1386-1529 (DNIIDTNQDN…NDDPNDNNGI (144 aa)) is disordered. Over residues 1388–1402 (IIDTNQDNNNNNNND) the composition is skewed to low complexity. The segment covering 1403–1415 (DISDSSSDDDDDN) has biased composition (acidic residues). Asn-1424 is a glycosylation site (N-linked (GlcNAc...) asparagine). Positions 1465–1494 (GEGIDNNNNNNNDNNINDDNNQQDPNNNNN) are enriched in low complexity. Over residues 1495-1514 (EIDDDGDDDGDDDDEGEDEN) the composition is skewed to acidic residues. Residues 1515–1529 (NNNNNNDDPNDNNGI) show a composition bias toward low complexity. Residues 1576-1813 (IEFKNVSFCY…KGKYYRMFAF (238 aa)) form the ABC transporter domain. An N-linked (GlcNAc...) asparagine glycan is attached at Asn-1580. 1611 to 1618 (GPSGSGKS) lines the ATP pocket. Residues Asn-1715 and Asn-1755 are each glycosylated (N-linked (GlcNAc...) asparagine).

It in the C-terminal section; belongs to the ABC transporter superfamily. ABCB family. Multidrug resistance exporter (TC 3.A.1.201) subfamily. In the N-terminal section; belongs to the peptidase S8 family.

Its subcellular location is the membrane. The polypeptide is Serine protease/ABC transporter B family protein tagD (tagD) (Dictyostelium discoideum (Social amoeba)).